A 177-amino-acid polypeptide reads, in one-letter code: Adenine phosphoribosyltransferase (177 aa).

The protein belongs to the purine/pyrimidine phosphoribosyltransferase family. Homodimer.

The protein localises to the cytoplasm. It catalyses the reaction AMP + diphosphate = 5-phospho-alpha-D-ribose 1-diphosphate + adenine. It participates in purine metabolism; AMP biosynthesis via salvage pathway; AMP from adenine: step 1/1. Functionally, catalyzes a salvage reaction resulting in the formation of AMP, that is energically less costly than de novo synthesis. In Rhodococcus jostii (strain RHA1), this protein is Adenine phosphoribosyltransferase.